Consider the following 230-residue polypeptide: Demethylmenaquinone methyltransferase (230 aa).

Residues Thr62, Asp80, 100 to 101 (DA), and Ser117 contribute to the S-adenosyl-L-methionine site.

This sequence belongs to the class I-like SAM-binding methyltransferase superfamily. MenG/UbiE family.

It carries out the reaction a 2-demethylmenaquinol + S-adenosyl-L-methionine = a menaquinol + S-adenosyl-L-homocysteine + H(+). The protein operates within quinol/quinone metabolism; menaquinone biosynthesis; menaquinol from 1,4-dihydroxy-2-naphthoate: step 2/2. Methyltransferase required for the conversion of demethylmenaquinol (DMKH2) to menaquinol (MKH2). In Mycobacterium sp. (strain JLS), this protein is Demethylmenaquinone methyltransferase.